The sequence spans 190 residues: Selenoprotein S (190 aa).

Residues 28 to 48 form a helical membrane-spanning segment; sequence SLLATYGWYIVFCCILLYVVF. Positions 78–90 are VCP/p97-interacting motif (VIM); the sequence is RQEALAAARLKMQ. The span at 115-138 shows a compositional bias: basic and acidic residues; the sequence is KIERWDSVQEGRSYRGDARKRQEE. The interval 115–190 is disordered; sequence KIERWDSVQE…RRGPSSGGUG (76 aa). Serine 140 is subject to Phosphoserine. Residues 160–174 show a composition bias toward gly residues; sequence RGGGYNPLSGEGGGA. Residue selenocysteine 189 is a non-standard amino acid, selenocysteine.

Belongs to the selenoprotein S family. As to quaternary structure, interacts with DERL1 and (via VIM motif) with VCP, suggesting that it forms a membrane complex with DERL1 that serves as a receptor for VCP. Also interacts with DERL2, DERL3 and SELENOK. The SELENOK-SELENOS complex interacts with VCP. Truncated SELENOS proteins produced by failed UGA/Sec decoding are ubiquitinated by the CRL2(KLHDC2) and CRL2(KLHDC3) complexes, which recognizes the glycine (Gly) at the C-terminus of truncated SELENOS proteins. Truncated SELENOS proteins produced by failed UGA/Sec decoding are also ubiquitinated by the CRL5(KLHDC1) complex. In terms of tissue distribution, ubiquitously expressed. Highest expression in liver and lung, with lower levels detected in spleen, kidney, brain, lymph nodes, small intestine, stomach and heart. Very low expression detected in longissimus dorsi.

The protein resides in the cytoplasm. Its subcellular location is the endoplasmic reticulum membrane. In terms of biological role, involved in the degradation process of misfolded endoplasmic reticulum (ER) luminal proteins. Participates in the transfer of misfolded proteins from the ER to the cytosol, where they are destroyed by the proteasome in a ubiquitin-dependent manner. Probably acts by serving as a linker between DERL1, which mediates the retrotranslocation of misfolded proteins into the cytosol, and the ATPase complex VCP, which mediates the translocation and ubiquitination. The chain is Selenoprotein S from Sus scrofa (Pig).